A 177-amino-acid polypeptide reads, in one-letter code: Ribosome maturation factor RimM (177 aa).

In terms of domain architecture, PRC barrel spans 101 to 174 (EGEFHLLDLV…WLLLTPPPGL (74 aa)).

This sequence belongs to the RimM family. Binds ribosomal protein uS19.

It localises to the cytoplasm. Functionally, an accessory protein needed during the final step in the assembly of 30S ribosomal subunit, possibly for assembly of the head region. Essential for efficient processing of 16S rRNA. May be needed both before and after RbfA during the maturation of 16S rRNA. It has affinity for free ribosomal 30S subunits but not for 70S ribosomes. In Synechococcus sp. (strain CC9605), this protein is Ribosome maturation factor RimM.